The chain runs to 290 residues: Protein translocase subunit SecF (290 aa).

The next 6 membrane-spanning stretches (helical) occupy residues 15-35, 131-151, 156-176, 184-204, 234-256, and 260-282; these read VFMI…FTKG, KAIL…TVRF, AISA…IFAI, SFIA…IIVF, TLYT…GVVL, and ILAI…SAIL.

The protein belongs to the SecD/SecF family. SecF subfamily. As to quaternary structure, forms a complex with SecD. Part of the essential Sec protein translocation apparatus which comprises SecA, SecYEG and auxiliary proteins SecDF. Other proteins may also be involved.

It is found in the cell inner membrane. Functionally, part of the Sec protein translocase complex. Interacts with the SecYEG preprotein conducting channel. SecDF uses the proton motive force (PMF) to complete protein translocation after the ATP-dependent function of SecA. This Dictyoglomus turgidum (strain DSM 6724 / Z-1310) protein is Protein translocase subunit SecF.